The sequence spans 475 residues: UDP-N-acetylmuramate--L-alanine ligase (475 aa).

117 to 123 (GTHGKTT) contributes to the ATP binding site.

The protein belongs to the MurCDEF family.

It is found in the cytoplasm. The catalysed reaction is UDP-N-acetyl-alpha-D-muramate + L-alanine + ATP = UDP-N-acetyl-alpha-D-muramoyl-L-alanine + ADP + phosphate + H(+). The protein operates within cell wall biogenesis; peptidoglycan biosynthesis. Functionally, cell wall formation. This chain is UDP-N-acetylmuramate--L-alanine ligase, found in Chlorobaculum tepidum (strain ATCC 49652 / DSM 12025 / NBRC 103806 / TLS) (Chlorobium tepidum).